The following is a 430-amino-acid chain: UDP-N-acetylglucosamine 1-carboxyvinyltransferase 1 (430 aa).

Residue 22–23 (KN) coordinates phosphoenolpyruvate. R93 provides a ligand contact to UDP-N-acetyl-alpha-D-glucosamine. C117 (proton donor) is an active-site residue. A 2-(S-cysteinyl)pyruvic acid O-phosphothioketal modification is found at C117. UDP-N-acetyl-alpha-D-glucosamine is bound by residues 122–126 (RPVDL), D305, and V327.

This sequence belongs to the EPSP synthase family. MurA subfamily.

It localises to the cytoplasm. The enzyme catalyses phosphoenolpyruvate + UDP-N-acetyl-alpha-D-glucosamine = UDP-N-acetyl-3-O-(1-carboxyvinyl)-alpha-D-glucosamine + phosphate. The protein operates within cell wall biogenesis; peptidoglycan biosynthesis. Cell wall formation. Adds enolpyruvyl to UDP-N-acetylglucosamine. In Listeria monocytogenes serovar 1/2a (strain ATCC BAA-679 / EGD-e), this protein is UDP-N-acetylglucosamine 1-carboxyvinyltransferase 1.